The chain runs to 177 residues: Large ribosomal subunit protein uL6 (177 aa).

The protein belongs to the universal ribosomal protein uL6 family. As to quaternary structure, part of the 50S ribosomal subunit.

Its function is as follows. This protein binds to the 23S rRNA, and is important in its secondary structure. It is located near the subunit interface in the base of the L7/L12 stalk, and near the tRNA binding site of the peptidyltransferase center. The sequence is that of Large ribosomal subunit protein uL6 from Teredinibacter turnerae (strain ATCC 39867 / T7901).